We begin with the raw amino-acid sequence, 1252 residues long: DNA-directed RNA polymerase subunit beta (1252 aa).

It belongs to the RNA polymerase beta chain family. In terms of assembly, the RNAP catalytic core consists of 2 alpha, 1 beta, 1 beta' and 1 omega subunit. When a sigma factor is associated with the core the holoenzyme is formed, which can initiate transcription.

The enzyme catalyses RNA(n) + a ribonucleoside 5'-triphosphate = RNA(n+1) + diphosphate. DNA-dependent RNA polymerase catalyzes the transcription of DNA into RNA using the four ribonucleoside triphosphates as substrates. The protein is DNA-directed RNA polymerase subunit beta of Chlamydia pneumoniae (Chlamydophila pneumoniae).